The following is a 1048-amino-acid chain: Putative cation efflux system protein SilA (1048 aa).

Helical transmembrane passes span 14 to 34 (FLVM…IINT), 125 to 145 (VSSE…YALV), 338 to 358 (LSSK…LFLW), 363 to 383 (ALVA…VMHF), 391 to 411 (MSLG…IVMI), 446 to 466 (VGPA…PIFT), 485 to 505 (SMAG…GFWI), 539 to 559 (TLLV…QVGG), 737 to 757 (GMTV…AMVG), 871 to 891 (KLKL…YLAF), 897 to 917 (ALLI…FLYW), 928 to 948 (TGFI…LMYL), 985 to 1005 (AMTV…TGAG), and 1012 to 1032 (IAAP…FIIP).

It belongs to the resistance-nodulation-cell division (RND) (TC 2.A.6) family.

It localises to the cell inner membrane. Functionally, component of the sil cation-efflux system that confers resistance to silver. May be part of a three-component cation/proton antiporter. The protein is Putative cation efflux system protein SilA (silA) of Salmonella typhimurium.